The chain runs to 433 residues: Protein slt1 (433 aa).

3 disordered regions span residues 159 to 184, 200 to 234, and 252 to 433; these read SPEESSESQAEVADQQTGPYSTSEYA, NAPEQQSGPDVAELNTLPNRSKTSSQASVSDEELS, and SNKR…DEDA. Composition is skewed to polar residues over residues 172-184 and 215-228; these read DQQTGPYSTSEYA and TLPNRSKTSSQASV. Phosphoserine occurs at positions 227, 229, and 269. Positions 343-353 are enriched in basic and acidic residues; the sequence is IDTKAGEKLTD. The segment covering 385 to 421 has biased composition (polar residues); the sequence is EGSNNHEQGSFNEPKSNVDSNDSASPKRPSSQASLRH. 3 positions are modified to phosphoserine: Ser409, Ser415, and Ser418.

The chain is Protein slt1 (slt1) from Schizosaccharomyces pombe (strain 972 / ATCC 24843) (Fission yeast).